The chain runs to 415 residues: Leucine-rich repeat-containing protein 34 (415 aa).

LRR repeat units lie at residues 246 to 272 and 274 to 296; these read SLRY…LKSN and TLEV…LSET.

Interacts with NPM1 and NCL. Expressed in testis where it specifically localizes to germ cells (at protein level). Not detected in other tissues tested (at protein level). Expressed in pluripotent embryonic stem cells and multipotent adult germline stem cells.

The protein resides in the nucleus. It localises to the nucleolus. Its subcellular location is the cytoplasm. Its function is as follows. Highly expressed in stem cells where it may be involved in regulation of pluripotency. In embryonic stem cells (ESCs), important for normal expression of the pluripotency regulators POU5F1/OCT4 and KLF4. Also important for expression of the ectodermal marker gene NES and the endodermal marker gene GATA4. Promotes stem cell proliferation in vitro. This is Leucine-rich repeat-containing protein 34 from Mus musculus (Mouse).